The following is an 82-amino-acid chain: Small ribosomal subunit protein bS16 (82 aa).

This sequence belongs to the bacterial ribosomal protein bS16 family.

This Alcanivorax borkumensis (strain ATCC 700651 / DSM 11573 / NCIMB 13689 / SK2) protein is Small ribosomal subunit protein bS16.